The sequence spans 737 residues: 1,4-alpha-glucan branching enzyme GlgB (737 aa).

The active-site Nucleophile is the Asp419. Catalysis depends on Glu472, which acts as the Proton donor.

This sequence belongs to the glycosyl hydrolase 13 family. GlgB subfamily. As to quaternary structure, monomer.

The catalysed reaction is Transfers a segment of a (1-&gt;4)-alpha-D-glucan chain to a primary hydroxy group in a similar glucan chain.. It functions in the pathway glycan biosynthesis; glycogen biosynthesis. Functionally, catalyzes the formation of the alpha-1,6-glucosidic linkages in glycogen by scission of a 1,4-alpha-linked oligosaccharide from growing alpha-1,4-glucan chains and the subsequent attachment of the oligosaccharide to the alpha-1,6 position. The polypeptide is 1,4-alpha-glucan branching enzyme GlgB (Cellvibrio japonicus (strain Ueda107) (Pseudomonas fluorescens subsp. cellulosa)).